A 137-amino-acid chain; its full sequence is Large ribosomal subunit protein uL16 (137 aa).

A compositionally biased stretch (basic residues) spans M1–Q13. A disordered region spans residues M1–T22.

This sequence belongs to the universal ribosomal protein uL16 family. In terms of assembly, part of the 50S ribosomal subunit.

Functionally, binds 23S rRNA and is also seen to make contacts with the A and possibly P site tRNAs. The protein is Large ribosomal subunit protein uL16 of Azoarcus sp. (strain BH72).